The primary structure comprises 265 residues: Formyltransferase/hydrolase complex Fhc subunit C (265 aa).

Belongs to the FwdC/FmdC family. Octaheteromer. Part of the formyltransferase/hydrolase complex fhc; composed of FhcA, FhcB, FhcC and FhcD.

It localises to the cytoplasm. It participates in one-carbon metabolism; formaldehyde degradation; formate from formaldehyde (H(4)MPT route): step 4/5. In terms of biological role, involved in the transformation of 5-formyl tetrahydromethanopterin (5-formyl-H(4)MPT) to methanofuran (MFR) and formate via the formylmethanofuran (formyl-MFR). The sequence is that of Formyltransferase/hydrolase complex Fhc subunit C (fhcC) from Methylorubrum extorquens (strain ATCC 14718 / DSM 1338 / JCM 2805 / NCIMB 9133 / AM1) (Methylobacterium extorquens).